We begin with the raw amino-acid sequence, 267 residues long: Diphthine synthase (267 aa).

Residues Leu9, Asp87, Ile90, 115–116 (SI), Leu166, Leu205, and His230 contribute to the S-adenosyl-L-methionine site.

Belongs to the diphthine synthase family. Homodimer.

It catalyses the reaction 2-[(3S)-amino-3-carboxypropyl]-L-histidyl-[translation elongation factor 2] + 3 S-adenosyl-L-methionine = diphthine-[translation elongation factor 2] + 3 S-adenosyl-L-homocysteine + 3 H(+). It participates in protein modification; peptidyl-diphthamide biosynthesis. Its function is as follows. S-adenosyl-L-methionine-dependent methyltransferase that catalyzes the trimethylation of the amino group of the modified target histidine residue in translation elongation factor 2 (EF-2), to form an intermediate called diphthine. The three successive methylation reactions represent the second step of diphthamide biosynthesis. The polypeptide is Diphthine synthase (Staphylothermus marinus (strain ATCC 43588 / DSM 3639 / JCM 9404 / F1)).